A 121-amino-acid polypeptide reads, in one-letter code: Chorion class CA protein ERA.4 (121 aa).

Positions 1 to 23 (MSSSFFCFFLFCFQTCLIQNVYS) are cleaved as a signal peptide. The tract at residues 24-57 (QCLGRVGPGGPPLGPYGGPLGGPGYGPVGYGGCG) is left arm. The segment at 58-105 (GYGGSGIGNVAVAGELPVAGSAAVLGQVPVIGAVEFAGPACAVGSVSI) is central domain. The tract at residues 106 to 121 (SGACGPTCGCGGSPYY) is right arm.

This sequence belongs to the chorion protein family.

Its function is as follows. This protein is one of many from the eggshell of the silk moth. This Bombyx mori (Silk moth) protein is Chorion class CA protein ERA.4 (ERA.4).